The primary structure comprises 340 residues: MGMEGCCSNKKVMEEEALVKKITGLAAAIGELPSLSPSPEVNALFTELVTSCIPPSTVDVDALGPDAQEMRARLIRLCADAEGHLEAHYSDLLAAHDNPLDHLTLFPYFNNYIKLSQLEHGLLARHVPGPAPARVAFLGSGPLPLSSLVLAARHLPDASFDNYDISGEANERASRLVRADADAGARMAFRTADVADVTTELEGYDVVFLAALVGMAAEEKARLVEHLGRHMAPGAALVVRSAHGARGFLYPVVDPEEIRRGGFEVLTVHHPEDEVINSVIIARKAAAPPPVAADRDVPVNMPMPAQCAVAVSRPCLGCACELGARAHQKMKEIAMEEMEA.

The protein belongs to the nicotianamine synthase (NAS)-like family. As to quaternary structure, homotrimer.

It catalyses the reaction 3 S-adenosyl-L-methionine = nicotianamine + 3 S-methyl-5'-thioadenosine + 3 H(+). Synthesizes nicotianamine, a polyamine that is the first intermediate in the synthesis of the phytosiderophores of the mugineic acid type found in gramineae which serves as a sensor for the physiological iron status within the plant, and/or might be involved in the transport of iron. The polypeptide is Nicotianamine synthase 9 (NAS9) (Hordeum vulgare (Barley)).